Reading from the N-terminus, the 64-residue chain is Alternative prion protein (64 aa).

Residues 1-22 are disordered; that stretch reads MEHWGEPIPGTGQSWRQPLSTS. The segment covering 11-22 has biased composition (polar residues); it reads TGQSWRQPLSTS. A helical membrane pass occupies residues 40-58; the sequence is WRWLGSAPWWWLGTATWWW.

It localises to the mitochondrion outer membrane. The sequence is that of Alternative prion protein from Ovis aries (Sheep).